A 431-amino-acid chain; its full sequence is Adenylosuccinate lyase (431 aa).

N(6)-(1,2-dicarboxyethyl)-AMP-binding positions include 4–5, 67–69, and 93–94; these read RY, RHD, and TS. The active-site Proton donor/acceptor is His-141. Gln-212 lines the N(6)-(1,2-dicarboxyethyl)-AMP pocket. The Proton donor/acceptor role is filled by Ser-262. N(6)-(1,2-dicarboxyethyl)-AMP contacts are provided by residues Ser-263, 268–270, Asn-276, and 307–311; these read KRN and SAERI.

It belongs to the lyase 1 family. Adenylosuccinate lyase subfamily. In terms of assembly, homodimer and homotetramer. Residues from neighboring subunits contribute catalytic and substrate-binding residues to each active site.

It carries out the reaction N(6)-(1,2-dicarboxyethyl)-AMP = fumarate + AMP. The catalysed reaction is (2S)-2-[5-amino-1-(5-phospho-beta-D-ribosyl)imidazole-4-carboxamido]succinate = 5-amino-1-(5-phospho-beta-D-ribosyl)imidazole-4-carboxamide + fumarate. Its pathway is purine metabolism; AMP biosynthesis via de novo pathway; AMP from IMP: step 2/2. It participates in purine metabolism; IMP biosynthesis via de novo pathway; 5-amino-1-(5-phospho-D-ribosyl)imidazole-4-carboxamide from 5-amino-1-(5-phospho-D-ribosyl)imidazole-4-carboxylate: step 2/2. Catalyzes two reactions in de novo purine nucleotide biosynthesis. Catalyzes the breakdown of 5-aminoimidazole- (N-succinylocarboxamide) ribotide (SAICAR or 2-[5-amino-1-(5-phospho-beta-D-ribosyl)imidazole-4-carboxamido]succinate) to 5-aminoimidazole-4-carboxamide ribotide (AICAR or 5-amino-1-(5-phospho-beta-D-ribosyl)imidazole-4-carboxamide) and fumarate, and of adenylosuccinate (ADS or N(6)-(1,2-dicarboxyethyl)-AMP) to adenosine monophosphate (AMP) and fumarate. The sequence is that of Adenylosuccinate lyase (purB) from Staphylococcus epidermidis (strain ATCC 35984 / DSM 28319 / BCRC 17069 / CCUG 31568 / BM 3577 / RP62A).